Consider the following 209-residue polypeptide: Bacteriorhodopsin (209 aa).

A helical membrane pass occupies residues 1–17 (LWLGTAGMFLGMLYFIA). Residues 18–31 (RGWGETDGRRQKFY) are Cytoplasmic-facing. A helical membrane pass occupies residues 32-50 (IATILITAIAFVNYLAMAL). Over 51–66 (GFGLTFIEFGGEQHPI) the chain is Extracellular. Residues 67–84 (YWARYTDWLFTTPLLLYD) form a helical membrane-spanning segment. Over 85–95 (LGLLAGADRNT) the chain is Cytoplasmic. The chain crosses the membrane as a helical span at residues 96–115 (IYSLVSLDVLMIGTGVVATL). Over 116 to 128 (SAGSGVLSAGAER) the chain is Extracellular. Residues 129-148 (LVWWGISTAFLLVLLYFLFS) form a helical membrane-spanning segment. The Cytoplasmic portion of the chain corresponds to 149–166 (SLSGRVANLPSDTRSTFK). A helical transmembrane segment spans residues 167–185 (TLRNLVTVVWLVYPVWWLV). Residues 186 to 197 (GSEGLGLVGIGI) lie on the Extracellular side of the membrane. A helical membrane pass occupies residues 198 to 209 (ETAGFMVIDLVA).

It belongs to the archaeal/bacterial/fungal opsin family.

It localises to the cell membrane. Functionally, light-driven proton pump. The polypeptide is Bacteriorhodopsin (bop) (Halobacterium halobium (strain shark)).